A 558-amino-acid chain; its full sequence is Eukaryotic translation initiation factor 3 subunit D (558 aa).

The RNA gate stretch occupies residues 296–310 (EFDLLTVNETSVEPP). Residues 534-558 (DNTFESEGEEEDSDEEEQVKDAFQR) form a disordered region. Residues 537–551 (FESEGEEEDSDEEEQ) are compositionally biased toward acidic residues.

This sequence belongs to the eIF-3 subunit D family. In terms of assembly, component of the eukaryotic translation initiation factor 3 (eIF-3) complex.

Its subcellular location is the cytoplasm. Its function is as follows. mRNA cap-binding component of the eukaryotic translation initiation factor 3 (eIF-3) complex, which is involved in protein synthesis of a specialized repertoire of mRNAs and, together with other initiation factors, stimulates binding of mRNA and methionyl-tRNAi to the 40S ribosome. The eIF-3 complex specifically targets and initiates translation of a subset of mRNAs involved in cell proliferation. In the eIF-3 complex, eif3d specifically recognizes and binds the 7-methylguanosine cap of a subset of mRNAs. The chain is Eukaryotic translation initiation factor 3 subunit D from Nasonia vitripennis (Parasitic wasp).